Consider the following 611-residue polypeptide: Probable potassium transport system protein Kup (611 aa).

A run of 13 helical transmembrane segments spans residues 24-44, 55-75, 102-122, 143-163, 175-195, 218-238, 252-272, 275-295, 296-316, 344-364, 374-394, 400-420, and 423-443; these read LVFG…FLFL, VSLI…FLAM, VAVF…ECVI, LIAQ…LFLF, FGPV…ISVA, LLGF…EALF, AWGF…AYLL, TDVI…LYIP, FLLL…SGIF, IYIN…LLIF, YGLA…AIFL, LYMG…LSTV, and ITHG…IVII.

It belongs to the HAK/KUP transporter (TC 2.A.72) family.

Its subcellular location is the cell membrane. It catalyses the reaction K(+)(in) + H(+)(in) = K(+)(out) + H(+)(out). Transport of potassium into the cell. Likely operates as a K(+):H(+) symporter. The sequence is that of Probable potassium transport system protein Kup from Methanospirillum hungatei JF-1 (strain ATCC 27890 / DSM 864 / NBRC 100397 / JF-1).